Reading from the N-terminus, the 151-residue chain is Ubiquitin-conjugating enzyme E2 2 (151 aa).

In terms of domain architecture, UBC core spans 4-150 (AARRRLMRDF…VRETVERSWE (147 aa)). Catalysis depends on cysteine 88, which acts as the Glycyl thioester intermediate.

Belongs to the ubiquitin-conjugating enzyme family.

It localises to the cytoplasm. The protein resides in the nucleus. The catalysed reaction is S-ubiquitinyl-[E1 ubiquitin-activating enzyme]-L-cysteine + [E2 ubiquitin-conjugating enzyme]-L-cysteine = [E1 ubiquitin-activating enzyme]-L-cysteine + S-ubiquitinyl-[E2 ubiquitin-conjugating enzyme]-L-cysteine.. The protein operates within protein modification; protein ubiquitination. Functionally, catalyzes the covalent attachment of ubiquitin to other proteins. Plays a role in transcription regulation by catalyzing the monoubiquitination of histone H2B to form H2BK123ub1. H2BK123ub1 gives a specific tag for epigenetic transcriptional activation and is also a prerequisite for H3K4me and H3K79me formation. Also involved in postreplication repair of UV-damaged DNA, in N-end rule-dependent protein degradation and in sporulation. This is Ubiquitin-conjugating enzyme E2 2 (UBC2) from Trichoderma harzianum (Hypocrea lixii).